Here is a 400-residue protein sequence, read N- to C-terminus: Exodeoxyribonuclease 7 large subunit (400 aa).

Belongs to the XseA family. In terms of assembly, heterooligomer composed of large and small subunits.

The protein resides in the cytoplasm. It catalyses the reaction Exonucleolytic cleavage in either 5'- to 3'- or 3'- to 5'-direction to yield nucleoside 5'-phosphates.. Bidirectionally degrades single-stranded DNA into large acid-insoluble oligonucleotides, which are then degraded further into small acid-soluble oligonucleotides. This Clostridium perfringens (strain 13 / Type A) protein is Exodeoxyribonuclease 7 large subunit.